The primary structure comprises 396 residues: Putative nickel insertion protein (396 aa).

Residues 333 to 355 are disordered; that stretch reads RSKLARESQTVETPDGPAKGKTV.

This sequence belongs to the LarC family.

In Rhodopirellula baltica (strain DSM 10527 / NCIMB 13988 / SH1), this protein is Putative nickel insertion protein.